We begin with the raw amino-acid sequence, 246 residues long: High mobility group protein 1 (246 aa).

A DNA-binding region (HMG box) is located at residues 106 to 179 (PKKPLTVFFA…NYQREKSKYL (74 aa)). The tract at residues 179–246 (LEAKKNGTLP…KKKDKSNSSI (68 aa)) is disordered. The segment covering 214–227 (PVEKRPHDDDGSSE) has biased composition (basic and acidic residues). A compositionally biased stretch (basic residues) spans 228 to 238 (KKKKKKKKDKK).

Interacts with FPR1. Interacts with an unidentified DNA helicase. Associates with rDNA.

It localises to the nucleus. The protein localises to the nucleolus. Functionally, DNA-binding protein that is probably part of the rDNA transcription apparatus. Acts synergetically with the RPA49 subunit of RNA polymerase I during rDNA transcription. May participate in mutagenesis control. The polypeptide is High mobility group protein 1 (HMO1) (Saccharomyces cerevisiae (strain ATCC 204508 / S288c) (Baker's yeast)).